A 343-amino-acid polypeptide reads, in one-letter code: Outer envelope pore protein 37, chloroplastic (343 aa).

Polar residues-rich tracts occupy residues 1-11 (MADPSSQNPNL) and 23-43 (THQIQSGTSELSPPSRPPCST). A disordered region spans residues 1-43 (MADPSSQNPNLATPPPPSSPSPTHQIQSGTSELSPPSRPPCST). A chloroplast-targeting transit peptide spans 1–73 (MADPSSQNPN…DSLLFLNKVS (73 aa)). Residues 74–76 (CKL) lie on the Cytoplasmic side of the membrane. Residues 77-86 (FDNLAKLKLS) form a beta stranded membrane-spanning segment. Residues 87–103 (FQNNSQREISQPQVSFT) lie on the Chloroplast intermembrane side of the membrane. The beta stranded transmembrane segment at 104–113 (SKHVSVLYDV) threads the bilayer. Residues 114–129 (EEKNTFIKSTLDVHPR) are Cytoplasmic-facing. The beta stranded transmembrane segment at 130 to 137 (LQLRALHN) threads the bilayer. At 138-154 (VKAQQGEVAMEANLTEP) the chain is on the chloroplast intermembrane side. A beta stranded membrane pass occupies residues 155 to 164 (GYSLELSSPV). Residues 165 to 169 (PIGYP) are Cytoplasmic-facing. Residues 170-178 (RATLKFPLG) traverse the membrane as a beta stranded segment. The Chloroplast intermembrane segment spans residues 179–219 (EISLQEKDEEEEEKQKRTLSVNGILKRQVMNGVCTALYTDE). A beta stranded transmembrane segment spans residues 220-228 (ELRLRYAYK). The Cytoplasmic segment spans residues 229–230 (DD). The beta stranded transmembrane segment at 231 to 240 (ALSFIPSISL) threads the bilayer. Pro-241 is a topological domain (chloroplast intermembrane). Residues 242–250 (SNAASFAFK) traverse the membrane as a beta stranded segment. The Cytoplasmic segment spans residues 251–257 (RRFSPSD). A beta stranded transmembrane segment spans residues 258–267 (KLSYWYNFDS). Topologically, residues 268 to 269 (NM) are chloroplast intermembrane. Residues 270–279 (WSAVYKRTYG) form a beta stranded membrane-spanning segment. Topologically, residues 280 to 286 (KDYKLKA) are cytoplasmic. A beta stranded transmembrane segment spans residues 287-296 (GYDSDVRLGW). Topologically, residues 297–316 (ASLWVGDEAGKVKTTPMKMK) are chloroplast intermembrane. A beta stranded membrane pass occupies residues 317–326 (VQFMLQVPQD). Residues 327–343 (DIKSSVLMFRVKKRWDI) are Cytoplasmic-facing.

This sequence belongs to the plastid outer envelope porin OEP37 (TC 1.B.47) family. Forms an hourglass-shaped multimeric complex. As to expression, ubiquitously expressed at low levels. Mostly present in cotyledons, and accumulates in seedlings and embryos.

Its subcellular location is the plastid. It localises to the chloroplast outer membrane. In terms of biological role, voltage-dependent peptide-sensitive high conductance rectifying cation channel with a strong affinity for TIC32 that is imported into the chloroplast. Conductance is pH-dependent decreasing with decreasing pH values. This Arabidopsis thaliana (Mouse-ear cress) protein is Outer envelope pore protein 37, chloroplastic (OEP37).